Consider the following 344-residue polypeptide: Protein RecA (344 aa).

65-72 (GPESSGKT) serves as a coordination point for ATP.

The protein belongs to the RecA family.

The protein resides in the cytoplasm. In terms of biological role, can catalyze the hydrolysis of ATP in the presence of single-stranded DNA, the ATP-dependent uptake of single-stranded DNA by duplex DNA, and the ATP-dependent hybridization of homologous single-stranded DNAs. It interacts with LexA causing its activation and leading to its autocatalytic cleavage. This chain is Protein RecA, found in Campylobacter lari.